A 2194-amino-acid chain; its full sequence is Glutamate synthase [NADH], amyloplastic (2194 aa).

The transit peptide at 1 to 101 directs the protein to the amyloplast; sequence MSNSLSLTFT…LYDPAFDKDS (101 aa). The active-site Nucleophile is the cysteine 102. One can recognise a Glutamine amidotransferase type-2 domain in the interval 102–503; it reads CGVGFVAELN…PGMMLLVDFE (402 aa). The disordered stretch occupies residues 1021–1045; that stretch reads GGKSNTGEGGEQPSRMEPLADGSRN. Residue 1193-1250 participates in FMN binding; the sequence is LAETHQTLVANDLRGRTTLQTDGQLKTGRDVAIAALLGAEEYGFSTAPLITLGCIMMR. Cysteine 1246, cysteine 1252, and cysteine 1257 together coordinate [3Fe-4S] cluster. 1974–1988 lines the NAD(+) pocket; sequence GGGDTGTDCIGTSIR.

It belongs to the glutamate synthase family. In terms of assembly, monomer. [3Fe-4S] cluster is required as a cofactor. Requires FAD as cofactor. The cofactor is FMN. In terms of tissue distribution, expressed in infected cells in root nodules. Barely detected in roots and stems.

It is found in the plastid. It localises to the amyloplast. It carries out the reaction 2 L-glutamate + NAD(+) = L-glutamine + 2-oxoglutarate + NADH + H(+). Its pathway is amino-acid biosynthesis; L-glutamate biosynthesis via GLT pathway; L-glutamate from 2-oxoglutarate and L-glutamine (NAD(+) route): step 1/1. It functions in the pathway energy metabolism; nitrogen metabolism. Its activity is regulated as follows. Inhibited by malate, citrate, glutamate, NAD(+) and azaserine, but not by 2-2' dipyridil and N-ethylmaleimide. Functionally, required for the assimilation of symbiotically fixed nitrogen into amino acids in root nodules. The polypeptide is Glutamate synthase [NADH], amyloplastic (Medicago sativa (Alfalfa)).